Reading from the N-terminus, the 106-residue chain is ATP-dependent Clp protease adapter protein ClpS (106 aa).

It belongs to the ClpS family. As to quaternary structure, binds to the N-terminal domain of the chaperone ClpA.

Functionally, involved in the modulation of the specificity of the ClpAP-mediated ATP-dependent protein degradation. In Salmonella agona (strain SL483), this protein is ATP-dependent Clp protease adapter protein ClpS.